The sequence spans 192 residues: Ubiquitin-conjugating enzyme E2 27 (192 aa).

Residues 2-150 (IDFSRIQKEL…ARYWTETFAK (149 aa)) enclose the UBC core domain. Residue Cys-88 is the Glycyl thioester intermediate of the active site. Residues 153–192 (SLEEKVKRLVEMGFGDAQVRSAIESSGGDENLALEKLCSA) form the UBA domain.

The protein belongs to the ubiquitin-conjugating enzyme family. Expressed in seeds, pistils, siliques, hypocotyls and leaves.

The catalysed reaction is S-ubiquitinyl-[E1 ubiquitin-activating enzyme]-L-cysteine + [E2 ubiquitin-conjugating enzyme]-L-cysteine = [E1 ubiquitin-activating enzyme]-L-cysteine + S-ubiquitinyl-[E2 ubiquitin-conjugating enzyme]-L-cysteine.. It participates in protein modification; protein ubiquitination. In terms of biological role, accepts the ubiquitin from the E1 complex and catalyzes its covalent attachment to other proteins. The chain is Ubiquitin-conjugating enzyme E2 27 (UBC27) from Arabidopsis thaliana (Mouse-ear cress).